We begin with the raw amino-acid sequence, 312 residues long: Phospho-N-acetylmuramoyl-pentapeptide-transferase (312 aa).

Transmembrane regions (helical) follow at residues 1–21 (MMVV…HYSK), 48–68 (GVAF…FGGI), 76–96 (EVMI…DDFL), 115–135 (FPLQ…LASH), 140–160 (GFMS…FVMV), 165–185 (AFNF…IVLL), 214–234 (VFMG…AYAL), 238–258 (VWLL…VVIQ), and 289–309 (VTLR…WLMG).

The protein belongs to the glycosyltransferase 4 family. MraY subfamily. Requires Mg(2+) as cofactor.

It is found in the cell membrane. It carries out the reaction UDP-N-acetyl-alpha-D-muramoyl-L-alanyl-gamma-D-glutamyl-meso-2,6-diaminopimeloyl-D-alanyl-D-alanine + di-trans,octa-cis-undecaprenyl phosphate = di-trans,octa-cis-undecaprenyl diphospho-N-acetyl-alpha-D-muramoyl-L-alanyl-D-glutamyl-meso-2,6-diaminopimeloyl-D-alanyl-D-alanine + UMP. It functions in the pathway cell wall biogenesis; peptidoglycan biosynthesis. In terms of biological role, catalyzes the initial step of the lipid cycle reactions in the biosynthesis of the cell wall peptidoglycan: transfers peptidoglycan precursor phospho-MurNAc-pentapeptide from UDP-MurNAc-pentapeptide onto the lipid carrier undecaprenyl phosphate, yielding undecaprenyl-pyrophosphoryl-MurNAc-pentapeptide, known as lipid I. The protein is Phospho-N-acetylmuramoyl-pentapeptide-transferase of Deinococcus radiodurans (strain ATCC 13939 / DSM 20539 / JCM 16871 / CCUG 27074 / LMG 4051 / NBRC 15346 / NCIMB 9279 / VKM B-1422 / R1).